The chain runs to 468 residues: Adenosylhomocysteinase (468 aa).

Positions 57, 132, and 194 each coordinate substrate. 195 to 197 (TTT) lines the NAD(+) pocket. Positions 224 and 228 each coordinate substrate. NAD(+) is bound by residues N229, 258-263 (GFGDVG), E281, N316, 337-339 (IGH), and N382.

This sequence belongs to the adenosylhomocysteinase family. It depends on NAD(+) as a cofactor.

It localises to the cytoplasm. It carries out the reaction S-adenosyl-L-homocysteine + H2O = L-homocysteine + adenosine. It participates in amino-acid biosynthesis; L-homocysteine biosynthesis; L-homocysteine from S-adenosyl-L-homocysteine: step 1/1. Functionally, may play a key role in the regulation of the intracellular concentration of adenosylhomocysteine. This Methylobacterium nodulans (strain LMG 21967 / CNCM I-2342 / ORS 2060) protein is Adenosylhomocysteinase.